A 306-amino-acid chain; its full sequence is Enoyl-CoA isomerase/hydratase MYCGRDRAFT_76805 (306 aa).

Substrate-binding positions include 103–107 (AGADL) and Gly-150.

It belongs to the enoyl-CoA hydratase/isomerase family.

It carries out the reaction a (3S)-3-hydroxyacyl-CoA = a (2E)-enoyl-CoA + H2O. The enzyme catalyses a 4-saturated-(3S)-3-hydroxyacyl-CoA = a (3E)-enoyl-CoA + H2O. Its pathway is siderophore biosynthesis. Its function is as follows. Enoyl-CoA isomerase/hydratase involved in the biosynthesis of a ferrichrome A-like siderophore which may contribute to organismal virulence. The first step of siderophore biosynthesis is performed by the HMG-CoA synthase (HMGS) MYCGRDRAFT_54740 which catalyzes the generation of HMG-CoA and CoA using acetoacetyl-CoA and acetyl-CoA as substrates. The enoyl-CoA isomerase/hydratase MYCGRDRAFT_76805 then catalyzes the conversion of HMG-CoA to methylglutaconyl-CoA. The acyltransferase MYCGRDRAFT_85486 then fuses methylglutaconyl-CoA with hydroxyornithine to yield methylglutaconyl hydroxyornithine. Methylglutaconyl hydroxyornithine is then available for use by the nonribosomal peptide synthetase NRPS2 to generate the ferrichrome A-like siderophore. The sequence is that of Enoyl-CoA isomerase/hydratase MYCGRDRAFT_76805 from Zymoseptoria tritici (strain CBS 115943 / IPO323) (Speckled leaf blotch fungus).